A 238-amino-acid polypeptide reads, in one-letter code: Ribitol-5-phosphate cytidylyltransferase 2 (238 aa).

CTP is bound by residues 7 to 10 and 81 to 87; these read LAGG and GTDRNET.

It belongs to the IspD/TarI cytidylyltransferase family. TarI subfamily. In terms of assembly, heterodimer together with TarJ.

The catalysed reaction is D-ribitol 5-phosphate + CTP + H(+) = CDP-L-ribitol + diphosphate. It participates in cell wall biogenesis; poly(ribitol phosphate) teichoic acid biosynthesis. Catalyzes the transfer of the cytidylyl group of CTP to D-ribitol 5-phosphate. The chain is Ribitol-5-phosphate cytidylyltransferase 2 from Staphylococcus aureus (strain NCTC 8325 / PS 47).